Here is a 493-residue protein sequence, read N- to C-terminus: Cytochrome P450 Tp9025 (493 aa).

A helical; Signal-anchor for type II membrane protein transmembrane segment spans residues 1-21; that stretch reads MALYIIFLLIASSFILFSFIF. N-linked (GlcNAc...) asparagine glycosylation is found at Asn209 and Asn411. A heme-binding site is contributed by Cys433.

This sequence belongs to the cytochrome P450 family. Heme serves as cofactor.

It localises to the membrane. It functions in the pathway secondary metabolite biosynthesis; terpenoid biosynthesis. Functionally, probably involved in the biosynthesis of germacrene-derived sesquiterpene lactones. The sequence is that of Cytochrome P450 Tp9025 from Tanacetum parthenium (Feverfew).